We begin with the raw amino-acid sequence, 356 residues long: Putative ankyrin repeat protein R599 (356 aa).

ANK repeat units lie at residues 111-143, 152-182, 183-213, 215-238, 239-266, and 267-298; these read NDDI…FCDN, RLEK…NVNT, HNYE…KLSD, KRKI…ELEV, NFDD…GANI, and NSIP…DINN.

The polypeptide is Putative ankyrin repeat protein R599 (Acanthamoeba polyphaga (Amoeba)).